We begin with the raw amino-acid sequence, 98 residues long: UPF0235 protein Pmen_4153 (98 aa).

Belongs to the UPF0235 family.

The sequence is that of UPF0235 protein Pmen_4153 from Ectopseudomonas mendocina (strain ymp) (Pseudomonas mendocina).